The primary structure comprises 226 residues: ATP-dependent dethiobiotin synthetase BioD (226 aa).

12-17 is an ATP binding site; that stretch reads EVGKTV. T16 serves as a coordination point for Mg(2+). The active site involves K39. Substrate is bound at residue T43. ATP-binding positions include D47, 108–111, 168–169, and 200–202; these read EALG, NC, and PYI. Mg(2+)-binding residues include D47 and E108.

This sequence belongs to the dethiobiotin synthetase family. In terms of assembly, homodimer. It depends on Mg(2+) as a cofactor.

It is found in the cytoplasm. It catalyses the reaction (7R,8S)-7,8-diammoniononanoate + CO2 + ATP = (4R,5S)-dethiobiotin + ADP + phosphate + 3 H(+). The catalysed reaction is (7R,8S)-8-amino-7-(carboxyamino)nonanoate + ATP = (4R,5S)-dethiobiotin + ADP + phosphate + H(+). The protein operates within cofactor biosynthesis; biotin biosynthesis; biotin from 7,8-diaminononanoate: step 1/2. Catalyzes a mechanistically unusual reaction, the ATP-dependent insertion of CO2 between the N7 and N8 nitrogen atoms of 7,8-diaminopelargonic acid (DAPA, also called 7,8-diammoniononanoate) to form a ureido ring. This cyanobacterium does not encode bioA (which catalyzes the formation of the precursor for this reaction in the cannonical pathway), instead it encodes bioU, which replaces bioA and also performs the first half of the cannonical BioD reaction. Thus in this organism BioD has a different substrate. In Gloeothece citriformis (strain PCC 7424) (Cyanothece sp. (strain PCC 7424)), this protein is ATP-dependent dethiobiotin synthetase BioD.